A 142-amino-acid chain; its full sequence is Peptide methionine sulfoxide reductase MsrB (142 aa).

Positions 3–126 (KEELKKKLSP…NSAALRFIPF (124 aa)) constitute a MsrB domain. Cys-115 functions as the Nucleophile in the catalytic mechanism.

Belongs to the MsrB Met sulfoxide reductase family.

The catalysed reaction is L-methionyl-[protein] + [thioredoxin]-disulfide + H2O = L-methionyl-(R)-S-oxide-[protein] + [thioredoxin]-dithiol. This is Peptide methionine sulfoxide reductase MsrB from Lactococcus lactis subsp. cremoris (strain MG1363).